The following is a 477-amino-acid chain: Probable malate:quinone oxidoreductase (477 aa).

The protein belongs to the MQO family. It depends on FAD as a cofactor.

The enzyme catalyses (S)-malate + a quinone = a quinol + oxaloacetate. The protein operates within carbohydrate metabolism; tricarboxylic acid cycle; oxaloacetate from (S)-malate (quinone route): step 1/1. In Synechococcus sp. (strain RCC307), this protein is Probable malate:quinone oxidoreductase.